A 244-amino-acid polypeptide reads, in one-letter code: 5-oxoprolinase subunit A (244 aa).

The protein belongs to the LamB/PxpA family. As to quaternary structure, forms a complex composed of PxpA, PxpB and PxpC.

It carries out the reaction 5-oxo-L-proline + ATP + 2 H2O = L-glutamate + ADP + phosphate + H(+). In terms of biological role, catalyzes the cleavage of 5-oxoproline to form L-glutamate coupled to the hydrolysis of ATP to ADP and inorganic phosphate. The chain is 5-oxoprolinase subunit A from Citrobacter koseri (strain ATCC BAA-895 / CDC 4225-83 / SGSC4696).